Here is a 69-residue protein sequence, read N- to C-terminus: Magnetosome protein MamI (69 aa).

Residues 1–2 (MP) are Cytoplasmic-facing. A helical membrane pass occupies residues 3 to 23 (SVIFGLLALAIGLLGLTAWWW). Residues 24–31 (SVTEFLRG) are Lumenal-facing. A helical membrane pass occupies residues 32-52 (AVPVALIIFGLVALAAGVQSV). At 53 to 69 (RVPPAGKRANSDPNIDG) the chain is on the cytoplasmic side.

This sequence belongs to the magnetosome MamI protein family.

The protein localises to the magnetosome membrane. In terms of biological role, may be involved in an early stage of magnetosome nucleation. Not essential for formation of magnetosome membrane vesicles, it is probably functionally redundant with other proteins. May bind magnetite. One of 7 genes (mamLQBIEMO) able to induce magnetosome membrane biogenesis; coexpression of mamLQRBIEMO in a deletion of the 17 gene mamAB operon restores magnetosome vesicle formation but not magnetite biosynthesis. The chain is Magnetosome protein MamI from Magnetospirillum gryphiswaldense (strain DSM 6361 / JCM 21280 / NBRC 15271 / MSR-1).